The following is a 547-amino-acid chain: Chaperonin GroEL (547 aa).

Residues 30–33, Lys-51, 87–91, Gly-415, and Asp-495 contribute to the ATP site; these read TLGP and DGTTT. The segment at 526 to 547 is disordered; the sequence is KKDTPVPPMPGGGMGGMGGMDF. Gly residues predominate over residues 536 to 547; it reads GGGMGGMGGMDF.

It belongs to the chaperonin (HSP60) family. Forms a cylinder of 14 subunits composed of two heptameric rings stacked back-to-back. Interacts with the co-chaperonin GroES.

It is found in the cytoplasm. It catalyses the reaction ATP + H2O + a folded polypeptide = ADP + phosphate + an unfolded polypeptide.. Functionally, together with its co-chaperonin GroES, plays an essential role in assisting protein folding. The GroEL-GroES system forms a nano-cage that allows encapsulation of the non-native substrate proteins and provides a physical environment optimized to promote and accelerate protein folding. The polypeptide is Chaperonin GroEL (Bartonella henselae (strain ATCC 49882 / DSM 28221 / CCUG 30454 / Houston 1) (Rochalimaea henselae)).